A 75-amino-acid chain; its full sequence is MADAMDLAQLREQEDRERHISNARSRRHEVSAFICEECDAPIPEARRRAIPGVQCCVTCQEILELKSKHYNGGAL.

Positions 1-23 (MADAMDLAQLREQEDRERHISNA) are disordered. The span at 9–20 (QLREQEDRERHI) shows a compositional bias: basic and acidic residues. The segment at 35 to 59 (CEECDAPIPEARRRAIPGVQCCVTC) adopts a dksA C4-type zinc-finger fold.

This is an uncharacterized protein from Escherichia phage 186 (Bacteriophage 186).